The primary structure comprises 158 residues: Putative cTAGE family member 3 (158 aa).

The stretch at 26 to 96 (QLQESQKQLL…AAVLEEDITD (71 aa)) forms a coiled coil.

This sequence belongs to the cTAGE family. As to expression, expressed in normal tissues including colon, mammary gland, ovary, placenta, stomach and testis, as well as several fetal tissues.

Functionally, tumor-associated antigen. The protein is Putative cTAGE family member 3 (CTAGE3P) of Homo sapiens (Human).